A 62-amino-acid chain; its full sequence is Neurotoxin 3 (62 aa).

Residues 1–16 (LECHDQQSSQTPTTTG) are compositionally biased toward polar residues. The segment at 1–22 (LECHDQQSSQTPTTTGCSGGET) is disordered. Cystine bridges form between cysteine 3-cysteine 24, cysteine 17-cysteine 41, cysteine 43-cysteine 54, and cysteine 55-cysteine 60.

This sequence belongs to the three-finger toxin family. Short-chain subfamily. Type I alpha-neurotoxin sub-subfamily. Expressed by the venom gland.

The protein localises to the secreted. Its function is as follows. Binds to muscle nicotinic acetylcholine receptor (nAChR) and inhibit acetylcholine from binding to the receptor, thereby impairing neuromuscular transmission. The polypeptide is Neurotoxin 3 (Naja sputatrix (Malayan spitting cobra)).